A 640-amino-acid polypeptide reads, in one-letter code: Fructose-1,6-bisphosphatase class 3 (640 aa).

This sequence belongs to the FBPase class 3 family. Mn(2+) is required as a cofactor.

It carries out the reaction beta-D-fructose 1,6-bisphosphate + H2O = beta-D-fructose 6-phosphate + phosphate. It functions in the pathway carbohydrate biosynthesis; gluconeogenesis. The polypeptide is Fructose-1,6-bisphosphatase class 3 (Lactococcus lactis subsp. lactis (strain IL1403) (Streptococcus lactis)).